The chain runs to 88 residues: Large ribosomal subunit protein bL31B (88 aa).

It belongs to the bacterial ribosomal protein bL31 family. Type B subfamily. In terms of assembly, part of the 50S ribosomal subunit.

The polypeptide is Large ribosomal subunit protein bL31B (Paraburkholderia phytofirmans (strain DSM 17436 / LMG 22146 / PsJN) (Burkholderia phytofirmans)).